The following is a 325-amino-acid chain: Interleukin-10 receptor subunit beta (325 aa).

The N-terminal stretch at 1 to 19 (MAWSLGSWLGGCLLVSALG) is a signal peptide. Topologically, residues 20-220 (MVPPPENVRM…QTTHDETVPS (201 aa)) are extracellular. Fibronectin type-III domains are found at residues 23–111 (PPEN…VDDT) and 114–216 (GPPG…THDE). Residues N49, N68, N102, and N161 are each glycosylated (N-linked (GlcNAc...) asparagine). The cysteines at positions 66 and 74 are disulfide-linked. C188 and C209 are joined by a disulfide. A helical transmembrane segment spans residues 221–242 (WMVAVILMASVFMVCLALLGCF). At 243-325 (ALLWCVYKKT…GTPPGQGPQS (83 aa)) the chain is on the cytoplasmic side. The disordered stretch occupies residues 301–325 (DSESGKQNPGDSCSLGTPPGQGPQS). Residues 305–315 (GKQNPGDSCSL) show a composition bias toward polar residues.

This sequence belongs to the type II cytokine receptor family. As to quaternary structure, heterodimer with IFNLR1.

The protein localises to the membrane. Its function is as follows. Shared cell surface receptor required for the activation of five class 2 cytokines: IL10, IL22, IL26, IL28, and IFNL1. The IFNLR1/IL10RB dimer is a receptor for the cytokine ligands IFNL2 and IFNL3 and mediates their antiviral activity. The ligand/receptor complex stimulate the activation of the JAK/STAT signaling pathway leading to the expression of IFN-stimulated genes (ISG), which contribute to the antiviral state. The sequence is that of Interleukin-10 receptor subunit beta (IL10RB) from Homo sapiens (Human).